We begin with the raw amino-acid sequence, 217 residues long: Somatotropin (217 aa).

The first 27 residues, 1 to 27, serve as a signal peptide directing secretion; the sequence is MMAAGPRTSLLLAFALLCLPWTQMVGA. Residue histidine 46 coordinates Zn(2+). A disulfide bridge connects residues cysteine 79 and cysteine 190. Residue serine 132 is modified to Phosphoserine. Glutamate 199 is a Zn(2+) binding site. A disulfide bridge links cysteine 207 with cysteine 215.

This sequence belongs to the somatotropin/prolactin family.

The protein resides in the secreted. Functionally, plays an important role in growth control. Its major role in stimulating body growth is to stimulate the liver and other tissues to secrete IGF1. It stimulates both the differentiation and proliferation of myoblasts. It also stimulates amino acid uptake and protein synthesis in muscle and other tissues. In Giraffa camelopardalis (Giraffe), this protein is Somatotropin (GH1).